Here is a 494-residue protein sequence, read N- to C-terminus: UPF0371 protein M6_Spy1067 (494 aa).

Belongs to the UPF0371 family.

The sequence is that of UPF0371 protein M6_Spy1067 from Streptococcus pyogenes serotype M6 (strain ATCC BAA-946 / MGAS10394).